The chain runs to 281 residues: Acetyl-coenzyme A carboxylase carboxyl transferase subunit beta (281 aa).

Positions 1–23 are disordered; it reads MAWFKREKKGISTSTEEKKEAPD. The 257-residue stretch at 25 to 281 folds into the CoA carboxyltransferase N-terminal domain; it reads LWNKCPNCKK…LAAFLKMMKN (257 aa). The Zn(2+) site is built by Cys-29, Cys-32, Cys-48, and Cys-51. The segment at 29-51 adopts a C4-type zinc-finger fold; the sequence is CPNCKKALHSADLLENKYVCQYC.

Belongs to the AccD/PCCB family. Acetyl-CoA carboxylase is a heterohexamer composed of biotin carboxyl carrier protein (AccB), biotin carboxylase (AccC) and two subunits each of ACCase subunit alpha (AccA) and ACCase subunit beta (AccD). Requires Zn(2+) as cofactor.

It localises to the cytoplasm. The enzyme catalyses N(6)-carboxybiotinyl-L-lysyl-[protein] + acetyl-CoA = N(6)-biotinyl-L-lysyl-[protein] + malonyl-CoA. It participates in lipid metabolism; malonyl-CoA biosynthesis; malonyl-CoA from acetyl-CoA: step 1/1. Component of the acetyl coenzyme A carboxylase (ACC) complex. Biotin carboxylase (BC) catalyzes the carboxylation of biotin on its carrier protein (BCCP) and then the CO(2) group is transferred by the transcarboxylase to acetyl-CoA to form malonyl-CoA. The sequence is that of Acetyl-coenzyme A carboxylase carboxyl transferase subunit beta from Pedobacter heparinus (strain ATCC 13125 / DSM 2366 / CIP 104194 / JCM 7457 / NBRC 12017 / NCIMB 9290 / NRRL B-14731 / HIM 762-3).